The sequence spans 159 residues: 17 kDa surface antigen (159 aa).

An N-terminal signal peptide occupies residues Met1–Ala19. A lipid anchor (N-palmitoyl cysteine) is attached at Cys20. Cys20 carries S-diacylglycerol cysteine lipidation.

The protein belongs to the rickettsiale 17 kDa surface antigen family.

It is found in the cell outer membrane. This Rickettsia felis (strain ATCC VR-1525 / URRWXCal2) (Rickettsia azadi) protein is 17 kDa surface antigen (omp).